We begin with the raw amino-acid sequence, 315 residues long: Large ribosomal subunit protein uL29m (315 aa).

The protein belongs to the universal ribosomal protein uL29 family. In terms of assembly, component of the mitochondrial large ribosomal subunit. Mature mitochondrial ribosomes consist of a small (37S) and a large (54S) subunit. The 37S subunit contains at least 33 different proteins and 1 molecule of RNA (15S). The 54S subunit contains at least 45 different proteins and 1 molecule of RNA (21S).

Its subcellular location is the mitochondrion. This Candida glabrata (strain ATCC 2001 / BCRC 20586 / JCM 3761 / NBRC 0622 / NRRL Y-65 / CBS 138) (Yeast) protein is Large ribosomal subunit protein uL29m (MRPL4).